The sequence spans 101 residues: Urease subunit beta (101 aa).

This sequence belongs to the urease beta subunit family. Heterotrimer of UreA (gamma), UreB (beta) and UreC (alpha) subunits. Three heterotrimers associate to form the active enzyme.

Its subcellular location is the cytoplasm. The catalysed reaction is urea + 2 H2O + H(+) = hydrogencarbonate + 2 NH4(+). The protein operates within nitrogen metabolism; urea degradation; CO(2) and NH(3) from urea (urease route): step 1/1. The protein is Urease subunit beta of Albidiferax ferrireducens (strain ATCC BAA-621 / DSM 15236 / T118) (Rhodoferax ferrireducens).